The following is a 353-amino-acid chain: tRNA N6-adenosine threonylcarbamoyltransferase (353 aa).

Positions 109 and 113 each coordinate Fe cation. Substrate contacts are provided by residues 136 to 140 (TVSGG), D169, G182, D186, and N284. A Fe cation-binding site is contributed by D312.

This sequence belongs to the KAE1 / TsaD family. Requires Fe(2+) as cofactor.

It is found in the cytoplasm. It catalyses the reaction L-threonylcarbamoyladenylate + adenosine(37) in tRNA = N(6)-L-threonylcarbamoyladenosine(37) in tRNA + AMP + H(+). Required for the formation of a threonylcarbamoyl group on adenosine at position 37 (t(6)A37) in tRNAs that read codons beginning with adenine. Is involved in the transfer of the threonylcarbamoyl moiety of threonylcarbamoyl-AMP (TC-AMP) to the N6 group of A37, together with TsaE and TsaB. TsaD likely plays a direct catalytic role in this reaction. This is tRNA N6-adenosine threonylcarbamoyltransferase from Chlorobium limicola (strain DSM 245 / NBRC 103803 / 6330).